We begin with the raw amino-acid sequence, 932 residues long: AP-3 complex subunit delta (932 aa).

Residue T2 is modified to N-acetylthreonine. HEAT repeat units lie at residues 157–194 (SLAR…QYPE), 196–231 (LRDN…KNPQ), 233–269 (FIQL…VEPK), 270–307 (LRAK…LEED), 310–346 (ETAM…KINT), 347–384 (DFIS…EDNL), 386–425 (AIVQ…ENYK), 427–466 (KMVN…DISD), 490–527 (VTIA…TLVE), 528–564 (NGND…NWCN), 570–601 (KRFE…ERSV), and 602–638 (EVLE…AYEL). Residues S700 and S727 each carry the phosphoserine modification. The tract at residues 720–868 (EREKERMSNP…EEGNLRKEDE (149 aa)) is disordered. 2 stretches are compositionally biased toward basic and acidic residues: residues 738 to 747 (ERTKNSKDLL) and 755 to 766 (SDKKPETIRLNR). A Phosphothreonine modification is found at T767. Low complexity predominate over residues 767–779 (TDNSLNSLSLSTT). Phosphoserine is present on residues S770 and S773. Over residues 783–793 (RKKKKGKKKNR) the composition is skewed to basic residues. Residue S798 is modified to Phosphoserine. The span at 806–832 (APKRKDAFQKPHDNHSTQNPLKKDKIN) shows a compositional bias: basic and acidic residues. Positions 838 to 855 (QLENFDFSNFGQSSNAGR) are enriched in polar residues. Over residues 857-868 (SQEEGNLRKEDE) the composition is skewed to basic and acidic residues. The stretch at 858–878 (QEEGNLRKEDELELSRLEANL) forms a coiled coil. Phosphoserine is present on S888. Residues 897–915 (KKKKKGKKSKSKNKLKTKA) show a composition bias toward basic residues. The segment at 897–932 (KKKKKGKKSKSKNKLKTKAKNSPEPNEFLRDQSTDI) is disordered. Position 918 is a phosphoserine (S918). Over residues 923–932 (EFLRDQSTDI) the composition is skewed to basic and acidic residues.

The protein belongs to the adaptor complexes large subunit family. In terms of assembly, adaptor protein complex 3 (AP-3) is a heterotetramer composed of 2 large adaptins (APL5 and APL6), a medium adaptin (APM3) and a small adaptin (APS3). Interacts with VPS41.

It is found in the golgi apparatus. It localises to the cytoplasmic vesicle. Its subcellular location is the clathrin-coated vesicle membrane. In terms of biological role, part of the AP-3 complex, an adaptor-related complex which is not clathrin-associated. The complex is associated with the Golgi region as well as more peripheral structures. It facilitates the budding of vesicles from the Golgi membrane and may be directly involved in trafficking to the vacuole. Required for the transport via the ALP pathway, which directs the transport of the cargo proteins PHO8 and VAM3 to the vacuole. In Saccharomyces cerevisiae (strain ATCC 204508 / S288c) (Baker's yeast), this protein is AP-3 complex subunit delta (APL5).